Reading from the N-terminus, the 457-residue chain is BAG family molecular chaperone regulator 4 (457 aa).

The segment covering 1–20 has biased composition (low complexity); it reads MSALRRSGYGPSDGPSYGRY. The interval 1-104 is disordered; sequence MSALRRSGYG…PYPGYNSNYW (104 aa). Serine 7 bears the Phosphoserine mark. Residues 31-48 are compositionally biased toward pro residues; sequence HVPPPLYPPLRPEPPQPP. Residues arginine 41, arginine 54, arginine 108, and arginine 185 each carry the omega-N-methylarginine modification. Disordered regions lie at residues 128–335 and 348–374; these read LNSY…SDLL and YGNA…SSDE. The segment covering 160–193 has biased composition (polar residues); it reads YTQSNYSTEVPNTYRSPGNSPTPMSRWMYSQQDC. Over residues 255–268 the composition is skewed to low complexity; it reads PWPSAAPSAPSAGS. Residues 284 to 295 show a composition bias toward pro residues; that stretch reads PQPPPSPPPQQP. Composition is skewed to polar residues over residues 326-335 and 348-365; these read AVNNDNSDLL and YGNA…SNNL. The BAG domain maps to 379-456; the sequence is SIKKIIHVLE…AILEKLEKKG (78 aa).

In terms of assembly, binds to the ATPase domain of HSP/HSC70 chaperones. Binds to the death domain of TNFRSF12. Binds to the death domain of TNFRSF1A in the absence of TNF and thereby prevents binding of adapter molecules such as TRADD or TRAF2. Interacts with PRKN.

The protein resides in the cytoplasm. In terms of biological role, inhibits the chaperone activity of HSP70/HSC70 by promoting substrate release. Prevents constitutive TNFRSF1A signaling. Negative regulator of PRKN translocation to damaged mitochondria. In Mus musculus (Mouse), this protein is BAG family molecular chaperone regulator 4 (Bag4).